Reading from the N-terminus, the 292-residue chain is 4-hydroxy-tetrahydrodipicolinate synthase (292 aa).

Pyruvate is bound at residue Thr45. Catalysis depends on Tyr133, which acts as the Proton donor/acceptor. Lys161 acts as the Schiff-base intermediate with substrate in catalysis. Ile203 serves as a coordination point for pyruvate.

This sequence belongs to the DapA family. Homotetramer; dimer of dimers.

It is found in the cytoplasm. The catalysed reaction is L-aspartate 4-semialdehyde + pyruvate = (2S,4S)-4-hydroxy-2,3,4,5-tetrahydrodipicolinate + H2O + H(+). It participates in amino-acid biosynthesis; L-lysine biosynthesis via DAP pathway; (S)-tetrahydrodipicolinate from L-aspartate: step 3/4. Catalyzes the condensation of (S)-aspartate-beta-semialdehyde [(S)-ASA] and pyruvate to 4-hydroxy-tetrahydrodipicolinate (HTPA). The polypeptide is 4-hydroxy-tetrahydrodipicolinate synthase (Aromatoleum aromaticum (strain DSM 19018 / LMG 30748 / EbN1) (Azoarcus sp. (strain EbN1))).